The primary structure comprises 346 residues: Melanoma-associated antigen B4 (346 aa).

Residues 1–18 (MPRGQKSKLRAREKRQRT) show a composition bias toward basic residues. The segment at 1-107 (MPRGQKSKLR…STSTERSLKD (107 aa)) is disordered. Over residues 45 to 54 (VLRDTASSSL) the composition is skewed to polar residues. The segment covering 92-101 (ASSSQASTST) has biased composition (low complexity). Positions 109–307 (LTRKTKMLVQ…NNFPLLYEEA (199 aa)) constitute an MAGE domain. Positions 311-346 (EEERAGARPRVAARRGTTAMTSAYSRATSSSSSQPM) are disordered. Residues 318 to 346 (RPRVAARRGTTAMTSAYSRATSSSSSQPM) are compositionally biased toward low complexity.

In terms of tissue distribution, expressed in testis.

The protein localises to the cytoplasm. This chain is Melanoma-associated antigen B4 (MAGEB4), found in Homo sapiens (Human).